Consider the following 408-residue polypeptide: LysM domain-containing protein ARB_01488 (408 aa).

The first 17 residues, 1 to 17, serve as a signal peptide directing secretion; that stretch reads MVKYALLPLVAVSLVQA. In terms of domain architecture, LysM 1 spans 42 to 91; the sequence is SWINVVDASGKLTCDAFLDTINVAKRQFIFWNPQLNSDCSNIQSKASYCA. The segment at 98-178 is disordered; that stretch reads SKQTRGQMDP…HGPKEAPPPD (81 aa). Positions 106–116 are enriched in pro residues; the sequence is DPPPKTKPLPP. 2 consecutive LysM domains span residues 270–320 and 360–406; these read QYHT…RVCV and SFEL…YACV.

The protein localises to the secreted. Might have a role in sequestration of chitin oligosaccharides (breakdown products of fungal cell walls that are released during invasion and act as triggers of host immunity) to dampen host defense. This Arthroderma benhamiae (strain ATCC MYA-4681 / CBS 112371) (Trichophyton mentagrophytes) protein is LysM domain-containing protein ARB_01488.